Here is a 426-residue protein sequence, read N- to C-terminus: Serine--tRNA ligase (426 aa).

Residue Thr-233–Glu-235 coordinates L-serine. Residue Arg-264–Glu-266 participates in ATP binding. Residue Glu-287 participates in L-serine binding. Residue Glu-351–Ser-354 coordinates ATP. Ser-387 lines the L-serine pocket.

It belongs to the class-II aminoacyl-tRNA synthetase family. Type-1 seryl-tRNA synthetase subfamily. In terms of assembly, homodimer. The tRNA molecule binds across the dimer.

The protein resides in the cytoplasm. It catalyses the reaction tRNA(Ser) + L-serine + ATP = L-seryl-tRNA(Ser) + AMP + diphosphate + H(+). The catalysed reaction is tRNA(Sec) + L-serine + ATP = L-seryl-tRNA(Sec) + AMP + diphosphate + H(+). The protein operates within aminoacyl-tRNA biosynthesis; selenocysteinyl-tRNA(Sec) biosynthesis; L-seryl-tRNA(Sec) from L-serine and tRNA(Sec): step 1/1. Functionally, catalyzes the attachment of serine to tRNA(Ser). Is also able to aminoacylate tRNA(Sec) with serine, to form the misacylated tRNA L-seryl-tRNA(Sec), which will be further converted into selenocysteinyl-tRNA(Sec). The protein is Serine--tRNA ligase of Pseudomonas aeruginosa (strain LESB58).